Consider the following 690-residue polypeptide: Potassium-transporting ATPase ATP-binding subunit (690 aa).

The disordered stretch occupies residues 1-23 (MNSTSTVRQPGGPRQQRRHTPKA). The next 4 helical transmembrane spans lie at 44 to 64 (IMVK…TGML), 78 to 98 (AMFN…ANFA), 233 to 253 (IALT…VATL), and 268 to 288 (LLIA…LSAI). Asp321 acts as the 4-aspartylphosphate intermediate in catalysis. ATP contacts are provided by residues Asp358, Glu362, 389 to 396 (FSARTRMS), and Lys408. The Mg(2+) site is built by Asp531 and Asp535. The next 3 membrane-spanning stretches (helical) occupy residues 601 to 621 (FAII…IMDL), 627 to 647 (AVLS…PLAL), and 665 to 685 (ILVY…LIDL).

The protein belongs to the cation transport ATPase (P-type) (TC 3.A.3) family. Type IA subfamily. The system is composed of three essential subunits: KdpA, KdpB and KdpC.

The protein localises to the cell inner membrane. It carries out the reaction K(+)(out) + ATP + H2O = K(+)(in) + ADP + phosphate + H(+). Part of the high-affinity ATP-driven potassium transport (or Kdp) system, which catalyzes the hydrolysis of ATP coupled with the electrogenic transport of potassium into the cytoplasm. This subunit is responsible for energy coupling to the transport system and for the release of the potassium ions to the cytoplasm. This Synechocystis sp. (strain ATCC 27184 / PCC 6803 / Kazusa) protein is Potassium-transporting ATPase ATP-binding subunit.